We begin with the raw amino-acid sequence, 285 residues long: Putative pyruvate, phosphate dikinase regulatory protein (285 aa).

An ADP-binding site is contributed by 165–172; it reads GVSRTSKT.

This sequence belongs to the pyruvate, phosphate/water dikinase regulatory protein family. PDRP subfamily.

It catalyses the reaction N(tele)-phospho-L-histidyl/L-threonyl-[pyruvate, phosphate dikinase] + ADP = N(tele)-phospho-L-histidyl/O-phospho-L-threonyl-[pyruvate, phosphate dikinase] + AMP + H(+). The enzyme catalyses N(tele)-phospho-L-histidyl/O-phospho-L-threonyl-[pyruvate, phosphate dikinase] + phosphate + H(+) = N(tele)-phospho-L-histidyl/L-threonyl-[pyruvate, phosphate dikinase] + diphosphate. In terms of biological role, bifunctional serine/threonine kinase and phosphorylase involved in the regulation of the pyruvate, phosphate dikinase (PPDK) by catalyzing its phosphorylation/dephosphorylation. The polypeptide is Putative pyruvate, phosphate dikinase regulatory protein (Lactobacillus delbrueckii subsp. bulgaricus (strain ATCC 11842 / DSM 20081 / BCRC 10696 / JCM 1002 / NBRC 13953 / NCIMB 11778 / NCTC 12712 / WDCM 00102 / Lb 14)).